The sequence spans 146 residues: Type II secretion system core protein G (146 aa).

Positions 1–9 are cleaved as a propeptide — leader sequence; sequence MKKMRKQTG. Phenylalanine 10 carries the post-translational modification N-methylphenylalanine. Residues 10 to 30 traverse the membrane as a helical segment; it reads FTLLEVMVVVVILGILASFVV.

This sequence belongs to the GSP G family. As to quaternary structure, type II secretion system is composed of four main components: the outer membrane complex, the inner membrane complex, the cytoplasmic secretion ATPase and the periplasm-spanning pseudopilus. Forms homomultimers. Interacts with EspL. Cleaved by the prepilin peptidase. Post-translationally, methylated by prepilin peptidase at the amino group of the N-terminal phenylalanine once the leader sequence is cleaved.

The protein resides in the cell inner membrane. Functionally, core component of the type II secretion system required for the energy-dependent secretion of extracellular factors such as proteases and toxins from the periplasm. Pseudopilin (pilin-like) protein that polymerizes to form the pseudopilus. Further polymerization triggers pseudopilus growth. This is Type II secretion system core protein G (epsG) from Vibrio cholerae serotype O1 (strain ATCC 39315 / El Tor Inaba N16961).